A 264-amino-acid chain; its full sequence is 3-methyl-2-oxobutanoate hydroxymethyltransferase (264 aa).

Mg(2+)-binding residues include aspartate 45 and aspartate 84. Residues 45–46, aspartate 84, and lysine 112 contribute to the 3-methyl-2-oxobutanoate site; that span reads DS. Glutamate 114 contributes to the Mg(2+) binding site. The active-site Proton acceptor is the glutamate 181.

It belongs to the PanB family. As to quaternary structure, homodecamer; pentamer of dimers. Mg(2+) is required as a cofactor.

It is found in the cytoplasm. It catalyses the reaction 3-methyl-2-oxobutanoate + (6R)-5,10-methylene-5,6,7,8-tetrahydrofolate + H2O = 2-dehydropantoate + (6S)-5,6,7,8-tetrahydrofolate. The protein operates within cofactor biosynthesis; (R)-pantothenate biosynthesis; (R)-pantoate from 3-methyl-2-oxobutanoate: step 1/2. Functionally, catalyzes the reversible reaction in which hydroxymethyl group from 5,10-methylenetetrahydrofolate is transferred onto alpha-ketoisovalerate to form ketopantoate. This Shigella sonnei (strain Ss046) protein is 3-methyl-2-oxobutanoate hydroxymethyltransferase.